The primary structure comprises 352 residues: Zinc finger protein 185 (352 aa).

Disordered regions lie at residues 1 to 73 and 86 to 121; these read MTTE…ELQS and DVLP…ITPP. Position 18 is a phosphoserine (Ser18). The segment covering 61 to 72 has biased composition (polar residues); that stretch reads KKTTSSPTQELQ. Residue Thr137 is modified to Phosphothreonine. Polar residues predominate over residues 251–268; that stretch reads VSSGKPVSSHCDSPSSIE. The segment at 251–287 is disordered; that stretch reads VSSGKPVSSHCDSPSSIEDSLDLAKKPPHEGTPSERP. The span at 272 to 287 shows a compositional bias: basic and acidic residues; it reads DLAKKPPHEGTPSERP. Residues 292-347 form the LIM zinc-binding domain; sequence CTYCSHEIQDCPKITLEHLGICCHEYCFKCGICNKPMGDLLDQIFIHRDTIHCGKC.

As to expression, expressed in skin, kidney, ovary, testis. Also expressed in brain, cartilage, heart, lung, spleen and thymus.

The protein localises to the cytoplasm. Its subcellular location is the cytoskeleton. It is found in the cell junction. It localises to the focal adhesion. Functionally, may be involved in the regulation of cellular proliferation and/or differentiation. The protein is Zinc finger protein 185 (Znf185) of Mus musculus (Mouse).